Reading from the N-terminus, the 171-residue chain is 3-hydroxydecanoyl-[acyl-carrier-protein] dehydratase (171 aa).

His70 is an active-site residue.

The protein belongs to the thioester dehydratase family. FabA subfamily. In terms of assembly, homodimer.

The protein localises to the cytoplasm. The catalysed reaction is a (3R)-hydroxyacyl-[ACP] = a (2E)-enoyl-[ACP] + H2O. It catalyses the reaction (3R)-hydroxydecanoyl-[ACP] = (2E)-decenoyl-[ACP] + H2O. It carries out the reaction (2E)-decenoyl-[ACP] = (3Z)-decenoyl-[ACP]. It participates in lipid metabolism; fatty acid biosynthesis. Its function is as follows. Necessary for the introduction of cis unsaturation into fatty acids. Catalyzes the dehydration of (3R)-3-hydroxydecanoyl-ACP to E-(2)-decenoyl-ACP and then its isomerization to Z-(3)-decenoyl-ACP. Can catalyze the dehydratase reaction for beta-hydroxyacyl-ACPs with saturated chain lengths up to 16:0, being most active on intermediate chain length. This chain is 3-hydroxydecanoyl-[acyl-carrier-protein] dehydratase, found in Marinomonas sp. (strain MWYL1).